A 617-amino-acid chain; its full sequence is Cell pattern formation-associated protein STUA (617 aa).

The disordered stretch occupies residues M1–L79. Polar residues predominate over residues T24–S34. Residues P45–Y58 are compositionally biased toward low complexity. A compositionally biased stretch (polar residues) spans G61–Q76. In terms of domain architecture, HTH APSES-type spans R106–P212. Residues G140–E161 constitute a DNA-binding region (H-T-H motif). Disordered stretches follow at residues A223–P274, S300–A451, and A463–R617. 2 stretches are compositionally biased toward low complexity: residues Q305–A318 and P334–T345. Composition is skewed to polar residues over residues I346–N361 and P368–S382. Over residues E438 to H447 the composition is skewed to basic and acidic residues. A compositionally biased stretch (low complexity) spans P488–A509. Polar residues-rich tracts occupy residues Q519–R533 and S553–N563. The interval K569–K593 is nuclear localization domain. The segment covering Q599 to R617 has biased composition (low complexity).

This sequence belongs to the EFG1/PHD1/stuA family.

The protein resides in the nucleus. Its function is as follows. Transcription factor that regulates asexual reproduction. Binds the StuA-response elements (StRE) with the consensus sequence 5'-(A/T)CGCG(T/A)N(A/C)-3' at the promoters of target genes. Required for the formation of aerial hyphae, efficient conidiation, and the formation of perithecia. Essential for the generation of normal turgor pressure within the appressorium. Required for infection of intact apple fruit and penetration of onion epidermal cells. The polypeptide is Cell pattern formation-associated protein STUA (Colletotrichum gloeosporioides (Anthracnose fungus)).